A 347-amino-acid polypeptide reads, in one-letter code: Phospho-N-acetylmuramoyl-pentapeptide-transferase (347 aa).

Transmembrane regions (helical) follow at residues 10–30 (SLVF…IFLG), 67–87 (AGGI…LPLG), 91–111 (TWLF…DDIV), 127–147 (FVLQ…IYKG), 164–184 (LGHS…AIVG), 195–215 (LDGL…VVAV), 220–240 (IPLA…SLAF), 250–270 (VFMG…CAVM), 275–295 (LLLI…ILQI), and 325–345 (VVKR…IAAL).

The protein belongs to the glycosyltransferase 4 family. MraY subfamily. Mg(2+) serves as cofactor.

The protein resides in the cell inner membrane. The catalysed reaction is UDP-N-acetyl-alpha-D-muramoyl-L-alanyl-gamma-D-glutamyl-meso-2,6-diaminopimeloyl-D-alanyl-D-alanine + di-trans,octa-cis-undecaprenyl phosphate = di-trans,octa-cis-undecaprenyl diphospho-N-acetyl-alpha-D-muramoyl-L-alanyl-D-glutamyl-meso-2,6-diaminopimeloyl-D-alanyl-D-alanine + UMP. Its pathway is cell wall biogenesis; peptidoglycan biosynthesis. In terms of biological role, catalyzes the initial step of the lipid cycle reactions in the biosynthesis of the cell wall peptidoglycan: transfers peptidoglycan precursor phospho-MurNAc-pentapeptide from UDP-MurNAc-pentapeptide onto the lipid carrier undecaprenyl phosphate, yielding undecaprenyl-pyrophosphoryl-MurNAc-pentapeptide, known as lipid I. The sequence is that of Phospho-N-acetylmuramoyl-pentapeptide-transferase from Chlamydia abortus (strain DSM 27085 / S26/3) (Chlamydophila abortus).